We begin with the raw amino-acid sequence, 259 residues long: Phosphatidylglycerol--prolipoprotein diacylglyceryl transferase (259 aa).

4 helical membrane-spanning segments follow: residues 12–32 (LSLH…VYLA), 46–66 (IIDF…IYYV), 83–103 (IWNG…VLFV), and 109–129 (VLNP…AQAI). Arginine 131 is a binding site for a 1,2-diacyl-sn-glycero-3-phospho-(1'-sn-glycerol). The next 3 membrane-spanning stretches (helical) occupy residues 167 to 187 (VPTF…IMVW), 194 to 214 (LVDG…RLVI), and 226 to 246 (GIRV…VFIF).

It belongs to the Lgt family.

It is found in the cell membrane. It carries out the reaction L-cysteinyl-[prolipoprotein] + a 1,2-diacyl-sn-glycero-3-phospho-(1'-sn-glycerol) = an S-1,2-diacyl-sn-glyceryl-L-cysteinyl-[prolipoprotein] + sn-glycerol 1-phosphate + H(+). It functions in the pathway protein modification; lipoprotein biosynthesis (diacylglyceryl transfer). Functionally, catalyzes the transfer of the diacylglyceryl group from phosphatidylglycerol to the sulfhydryl group of the N-terminal cysteine of a prolipoprotein, the first step in the formation of mature lipoproteins. This Streptococcus equi subsp. equi (strain 4047) protein is Phosphatidylglycerol--prolipoprotein diacylglyceryl transferase.